The sequence spans 1070 residues: DNA-directed RNA polymerase subunit beta (1070 aa).

Belongs to the RNA polymerase beta chain family. In plastids the minimal PEP RNA polymerase catalytic core is composed of four subunits: alpha, beta, beta', and beta''. When a (nuclear-encoded) sigma factor is associated with the core the holoenzyme is formed, which can initiate transcription.

The protein localises to the plastid. The protein resides in the chloroplast. The catalysed reaction is RNA(n) + a ribonucleoside 5'-triphosphate = RNA(n+1) + diphosphate. Its function is as follows. DNA-dependent RNA polymerase catalyzes the transcription of DNA into RNA using the four ribonucleoside triphosphates as substrates. This Nicotiana tomentosiformis (Tobacco) protein is DNA-directed RNA polymerase subunit beta.